A 346-amino-acid chain; its full sequence is MQPIRYRTDLTPYNTFGLRAQARAFIALEHADGLRDIVRLPEFDRDTVLWLGGGSNILLMQDYAGLVVHMENKGIREIARSDGMVLIEAQAGEIWHDFVLHTVALGLSGLENLSLIPGTVGASPVQNIGAYGVEAKDVIHSVRCFDLDTETFVTLSNADCRFAYRESLFKQEGKGRYVIVSVVFALKTHFVPNLGYGDLAAKVAELSAGREATAKDVSDAVCAIRNSKLPNPNVLGNVGSFFKNPVIGAEKAAALLEQHPDMPHYPQPDGSVKLAAGWLIDQCRLKGFQIGGAAVHGRQALVLVNKNNASANDVRQLAQHIKFTVFARFQVELHAEPNWLPASFSL.

Residues 18–189 (LRAQARAFIA…VSVVFALKTH (172 aa)) form the FAD-binding PCMH-type domain. Arginine 165 is an active-site residue. Serine 240 serves as the catalytic Proton donor. Glutamate 336 is an active-site residue.

The protein belongs to the MurB family. It depends on FAD as a cofactor.

It is found in the cytoplasm. The catalysed reaction is UDP-N-acetyl-alpha-D-muramate + NADP(+) = UDP-N-acetyl-3-O-(1-carboxyvinyl)-alpha-D-glucosamine + NADPH + H(+). It functions in the pathway cell wall biogenesis; peptidoglycan biosynthesis. In terms of biological role, cell wall formation. The protein is UDP-N-acetylenolpyruvoylglucosamine reductase of Neisseria meningitidis serogroup C (strain 053442).